A 157-amino-acid chain; its full sequence is S-ribosylhomocysteine lyase (157 aa).

Residues H53, H57, and C124 each coordinate Fe cation.

This sequence belongs to the LuxS family. Homodimer. Fe cation is required as a cofactor.

It catalyses the reaction S-(5-deoxy-D-ribos-5-yl)-L-homocysteine = (S)-4,5-dihydroxypentane-2,3-dione + L-homocysteine. Functionally, involved in the synthesis of autoinducer 2 (AI-2) which is secreted by bacteria and is used to communicate both the cell density and the metabolic potential of the environment. The regulation of gene expression in response to changes in cell density is called quorum sensing. Catalyzes the transformation of S-ribosylhomocysteine (RHC) to homocysteine (HC) and 4,5-dihydroxy-2,3-pentadione (DPD). The chain is S-ribosylhomocysteine lyase from Borreliella afzelii (strain PKo) (Borrelia afzelii).